Here is a 95-residue protein sequence, read N- to C-terminus: Aspartyl/glutamyl-tRNA(Asn/Gln) amidotransferase subunit C (95 aa).

This sequence belongs to the GatC family. Heterotrimer of A, B and C subunits.

The catalysed reaction is L-glutamyl-tRNA(Gln) + L-glutamine + ATP + H2O = L-glutaminyl-tRNA(Gln) + L-glutamate + ADP + phosphate + H(+). It carries out the reaction L-aspartyl-tRNA(Asn) + L-glutamine + ATP + H2O = L-asparaginyl-tRNA(Asn) + L-glutamate + ADP + phosphate + 2 H(+). Functionally, allows the formation of correctly charged Asn-tRNA(Asn) or Gln-tRNA(Gln) through the transamidation of misacylated Asp-tRNA(Asn) or Glu-tRNA(Gln) in organisms which lack either or both of asparaginyl-tRNA or glutaminyl-tRNA synthetases. The reaction takes place in the presence of glutamine and ATP through an activated phospho-Asp-tRNA(Asn) or phospho-Glu-tRNA(Gln). In Azotobacter vinelandii (strain DJ / ATCC BAA-1303), this protein is Aspartyl/glutamyl-tRNA(Asn/Gln) amidotransferase subunit C.